Reading from the N-terminus, the 153-residue chain is Troponin C (153 aa).

At Ala-1 the chain carries Blocked amino end (Ala). EF-hand domains follow at residues 10–45 (EQVQ…LGQT), 46–81 (FEEK…FLVE), 86–121 (AMQE…LDDK), and 122–153 (LTED…MMTG). Ca(2+) is bound by residues Asp-59, Asp-61, Ser-63, Glu-65, Glu-70, Asp-99, Asp-110, Asp-135, Asp-137, Ser-139, Thr-141, and Glu-146.

This sequence belongs to the troponin C family.

Functionally, troponin is the central regulatory protein of striated muscle contraction. Tn consists of three components: Tn-I which is the inhibitor of actomyosin ATPase, Tn-T which contains the binding site for tropomyosin and Tn-C. The binding of calcium to Tn-C abolishes the inhibitory action of Tn on actin filaments. This Tachypleus tridentatus (Japanese horseshoe crab) protein is Troponin C.